The following is a 229-amino-acid chain: 2-C-methyl-D-erythritol 4-phosphate cytidylyltransferase (229 aa).

It belongs to the IspD/TarI cytidylyltransferase family. IspD subfamily.

It carries out the reaction 2-C-methyl-D-erythritol 4-phosphate + CTP + H(+) = 4-CDP-2-C-methyl-D-erythritol + diphosphate. It functions in the pathway isoprenoid biosynthesis; isopentenyl diphosphate biosynthesis via DXP pathway; isopentenyl diphosphate from 1-deoxy-D-xylulose 5-phosphate: step 2/6. In terms of biological role, catalyzes the formation of 4-diphosphocytidyl-2-C-methyl-D-erythritol from CTP and 2-C-methyl-D-erythritol 4-phosphate (MEP). This is 2-C-methyl-D-erythritol 4-phosphate cytidylyltransferase from Clostridium botulinum (strain Loch Maree / Type A3).